The chain runs to 157 residues: Transcription elongation factor GreB (157 aa).

It belongs to the GreA/GreB family. GreB subfamily.

Functionally, necessary for efficient RNA polymerase transcription elongation past template-encoded arresting sites. The arresting sites in DNA have the property of trapping a certain fraction of elongating RNA polymerases that pass through, resulting in locked ternary complexes. Cleavage of the nascent transcript by cleavage factors such as GreA or GreB allows the resumption of elongation from the new 3'terminus. GreB releases sequences of up to 9 nucleotides in length. This chain is Transcription elongation factor GreB, found in Salmonella typhimurium (strain LT2 / SGSC1412 / ATCC 700720).